Consider the following 98-residue polypeptide: NADH-ubiquinone oxidoreductase chain 4L (98 aa).

3 consecutive transmembrane segments (helical) span residues 2-22, 29-49, and 61-81; these read PSIS…MLVF, SLLC…LTIM, and ILLL…LVMM.

The protein belongs to the complex I subunit 4L family. As to quaternary structure, core subunit of respiratory chain NADH dehydrogenase (Complex I) which is composed of 45 different subunits.

The protein localises to the mitochondrion inner membrane. The enzyme catalyses a ubiquinone + NADH + 5 H(+)(in) = a ubiquinol + NAD(+) + 4 H(+)(out). In terms of biological role, core subunit of the mitochondrial membrane respiratory chain NADH dehydrogenase (Complex I) which catalyzes electron transfer from NADH through the respiratory chain, using ubiquinone as an electron acceptor. Part of the enzyme membrane arm which is embedded in the lipid bilayer and involved in proton translocation. The polypeptide is NADH-ubiquinone oxidoreductase chain 4L (MT-ND4L) (Lepilemur seali (Seal's sportive lemur)).